Here is a 621-residue protein sequence, read N- to C-terminus: Chaperone protein DnaK (621 aa).

Position 179 is a phosphothreonine; by autocatalysis (Thr179). Residues Ser583–Asp605 show a composition bias toward polar residues. The tract at residues Ser583 to Glu621 is disordered. Residues Asn606–Glu621 are compositionally biased toward basic and acidic residues.

It belongs to the heat shock protein 70 family.

Its function is as follows. Acts as a chaperone. This Endomicrobium trichonymphae protein is Chaperone protein DnaK.